Reading from the N-terminus, the 333-residue chain is DNA-directed RNA polymerase subunit alpha (333 aa).

The interval 1–233 is alpha N-terminal domain (alpha-NTD); the sequence is MVQEKLRFST…DLFIPFLHAE (233 aa). Residues 266–333 form an alpha C-terminal domain (alpha-CTD) region; the sequence is KKEIALKSIF…DILKIQKYFT (68 aa).

It belongs to the RNA polymerase alpha chain family. As to quaternary structure, in plastids the minimal PEP RNA polymerase catalytic core is composed of four subunits: alpha, beta, beta', and beta''. When a (nuclear-encoded) sigma factor is associated with the core the holoenzyme is formed, which can initiate transcription.

Its subcellular location is the plastid. It localises to the chloroplast. It catalyses the reaction RNA(n) + a ribonucleoside 5'-triphosphate = RNA(n+1) + diphosphate. In terms of biological role, DNA-dependent RNA polymerase catalyzes the transcription of DNA into RNA using the four ribonucleoside triphosphates as substrates. The protein is DNA-directed RNA polymerase subunit alpha of Phaseolus angularis (Azuki bean).